A 286-amino-acid polypeptide reads, in one-letter code: Phosphatidylserine decarboxylase proenzyme (286 aa).

Catalysis depends on charge relay system; for autoendoproteolytic cleavage activity residues aspartate 90, histidine 147, and serine 252. Serine 252 serves as the catalytic Schiff-base intermediate with substrate; via pyruvic acid; for decarboxylase activity. At serine 252 the chain carries Pyruvic acid (Ser); by autocatalysis.

It belongs to the phosphatidylserine decarboxylase family. PSD-B subfamily. Prokaryotic type I sub-subfamily. As to quaternary structure, heterodimer of a large membrane-associated beta subunit and a small pyruvoyl-containing alpha subunit. Pyruvate serves as cofactor. Post-translationally, is synthesized initially as an inactive proenzyme. Formation of the active enzyme involves a self-maturation process in which the active site pyruvoyl group is generated from an internal serine residue via an autocatalytic post-translational modification. Two non-identical subunits are generated from the proenzyme in this reaction, and the pyruvate is formed at the N-terminus of the alpha chain, which is derived from the carboxyl end of the proenzyme. The autoendoproteolytic cleavage occurs by a canonical serine protease mechanism, in which the side chain hydroxyl group of the serine supplies its oxygen atom to form the C-terminus of the beta chain, while the remainder of the serine residue undergoes an oxidative deamination to produce ammonia and the pyruvoyl prosthetic group on the alpha chain. During this reaction, the Ser that is part of the protease active site of the proenzyme becomes the pyruvoyl prosthetic group, which constitutes an essential element of the active site of the mature decarboxylase.

It localises to the cell membrane. It carries out the reaction a 1,2-diacyl-sn-glycero-3-phospho-L-serine + H(+) = a 1,2-diacyl-sn-glycero-3-phosphoethanolamine + CO2. Its pathway is phospholipid metabolism; phosphatidylethanolamine biosynthesis; phosphatidylethanolamine from CDP-diacylglycerol: step 2/2. Functionally, catalyzes the formation of phosphatidylethanolamine (PtdEtn) from phosphatidylserine (PtdSer). The protein is Phosphatidylserine decarboxylase proenzyme of Ectopseudomonas mendocina (strain ymp) (Pseudomonas mendocina).